We begin with the raw amino-acid sequence, 247 residues long: Carboxy-S-adenosyl-L-methionine synthase (247 aa).

Residues tyrosine 39, 64 to 66 (GCS), 89 to 90 (DN), 117 to 118 (DI), asparagine 132, and arginine 199 each bind S-adenosyl-L-methionine.

This sequence belongs to the class I-like SAM-binding methyltransferase superfamily. Cx-SAM synthase family. Homodimer.

The enzyme catalyses prephenate + S-adenosyl-L-methionine = carboxy-S-adenosyl-L-methionine + 3-phenylpyruvate + H2O. In terms of biological role, catalyzes the conversion of S-adenosyl-L-methionine (SAM) to carboxy-S-adenosyl-L-methionine (Cx-SAM). The polypeptide is Carboxy-S-adenosyl-L-methionine synthase (Escherichia coli O139:H28 (strain E24377A / ETEC)).